The following is a 307-amino-acid chain: uncharacterized protein (307 aa).

Residues 12–34 form a helical membrane-spanning segment; that stretch reads LLAFLLALIMIGSVFAYMLSGGS.

Its subcellular location is the membrane. This is an uncharacterized protein from Archaeoglobus fulgidus (strain ATCC 49558 / DSM 4304 / JCM 9628 / NBRC 100126 / VC-16).